The sequence spans 213 residues: 3-isopropylmalate dehydratase small subunit (213 aa).

It belongs to the LeuD family. LeuD type 1 subfamily. Heterodimer of LeuC and LeuD.

It carries out the reaction (2R,3S)-3-isopropylmalate = (2S)-2-isopropylmalate. Its pathway is amino-acid biosynthesis; L-leucine biosynthesis; L-leucine from 3-methyl-2-oxobutanoate: step 2/4. Its function is as follows. Catalyzes the isomerization between 2-isopropylmalate and 3-isopropylmalate, via the formation of 2-isopropylmaleate. This Pseudomonas syringae pv. syringae (strain B728a) protein is 3-isopropylmalate dehydratase small subunit.